An 806-amino-acid chain; its full sequence is Acetyl-CoA decarbonylase/synthase complex subunit alpha 1 (806 aa).

[4Fe-4S] cluster-binding residues include C73, C76, C77, C79, C84, and C94. H117 serves as a coordination point for CO. H250, C278, and C323 together coordinate [Ni-4Fe-4S] cluster. 4Fe-4S ferredoxin-type domains are found at residues S406–A436 and F445–I475. [4Fe-4S] cluster contacts are provided by C417, C420, C423, C427, C455, C458, C461, and C465. Residues C523, C552, and C587 each coordinate [Ni-4Fe-4S] cluster.

It belongs to the Ni-containing carbon monoxide dehydrogenase family. Heterotetramer of two alpha and two epsilon subunits. The ACDS complex is made up of alpha, epsilon, beta, gamma and delta subunits with a probable stoichiometry of (alpha(2)epsilon(2))(4)-beta(8)-(gamma(1)delta(1))(8). It depends on [4Fe-4S] cluster as a cofactor. [Ni-4Fe-4S] cluster serves as cofactor.

It catalyses the reaction CO + 2 oxidized [2Fe-2S]-[ferredoxin] + H2O = 2 reduced [2Fe-2S]-[ferredoxin] + CO2 + 2 H(+). It participates in one-carbon metabolism; methanogenesis from acetate. Functionally, part of the ACDS complex that catalyzes the reversible cleavage of acetyl-CoA, allowing growth on acetate as sole source of carbon and energy. The alpha-epsilon subcomponent functions as a carbon monoxide dehydrogenase. The polypeptide is Acetyl-CoA decarbonylase/synthase complex subunit alpha 1 (Methanosarcina mazei (strain ATCC BAA-159 / DSM 3647 / Goe1 / Go1 / JCM 11833 / OCM 88) (Methanosarcina frisia)).